The primary structure comprises 473 residues: Cephalotoxin-like protein (473 aa).

The signal sequence occupies residues 1 to 21 (RWLGWQKFCWISCLFSSISSG). 2 coiled-coil regions span residues 40–60 (AINAINEEYIAQAKAIEEALK) and 116–147 (LINERFNEVNAKLDRIDEKLDEMEKSIKADTA).

In terms of tissue distribution, component of the acid-insoluble and acid-soluble organic matrix of the aragonitic skeleton (at protein level).

It localises to the secreted. This chain is Cephalotoxin-like protein, found in Acropora millepora (Staghorn coral).